The sequence spans 216 residues: MRTVLLTGFEPFENEPINPSWEAVRALDGERIGDAVVVARQLPCVFGAAIDGMAALLRELKPAIAIAVGQAGGRTEMSVERVAINVDDARIADNAGAQPIDTVIAAKGPAAYFSTLPIKAIVRDMRAAGVPAAVSQTAGTFVCNHVFYGLMHALATPAGEGVRGGFIHIPYLPEQAARHPGEASMSLESMVRGIRQAIATTLATEVDVREQGGQLH.

Residues Glu-80, Cys-143, and His-168 contribute to the active site.

It belongs to the peptidase C15 family. Homotetramer.

It localises to the cytoplasm. The enzyme catalyses Release of an N-terminal pyroglutamyl group from a polypeptide, the second amino acid generally not being Pro.. Functionally, removes 5-oxoproline from various penultimate amino acid residues except L-proline. This Cupriavidus pinatubonensis (strain JMP 134 / LMG 1197) (Cupriavidus necator (strain JMP 134)) protein is Pyrrolidone-carboxylate peptidase.